The following is an 89-amino-acid chain: MAVADINKSEVIKQFARGTNDTGSPEVQVALLTTRINELTPHFKANMKDHHSRRGLLRMVSRRRRLLDYLKSNDADRYRALIEKLGLRK.

It belongs to the universal ribosomal protein uS15 family. Part of the 30S ribosomal subunit. Forms a bridge to the 50S subunit in the 70S ribosome, contacting the 23S rRNA.

In terms of biological role, one of the primary rRNA binding proteins, it binds directly to 16S rRNA where it helps nucleate assembly of the platform of the 30S subunit by binding and bridging several RNA helices of the 16S rRNA. Its function is as follows. Forms an intersubunit bridge (bridge B4) with the 23S rRNA of the 50S subunit in the ribosome. The polypeptide is Small ribosomal subunit protein uS15 (Cupriavidus pinatubonensis (strain JMP 134 / LMG 1197) (Cupriavidus necator (strain JMP 134))).